The following is a 365-amino-acid chain: 2'-hydroxybiphenyl-2-sulfinate desulfinase (365 aa).

Cys-27 is an active-site residue. Positions 27, 60, and 70 each coordinate 2'-hydroxybiphenyl-2-sulfinate. The active site involves Arg-70.

It belongs to the DszB desulfinase family. In terms of assembly, monomer.

The protein localises to the cytoplasm. It carries out the reaction 2'-hydroxybiphenyl-2-sulfinate + H2O = biphenyl-2-ol + sulfite + H(+). The protein operates within sulfur metabolism; dibenzothiophene degradation. Catalyzes the third and final step of the '4S' desulfurization pathway that removes covalently bound sulfur from dibenzothiophene (DBT) without breaking carbon-carbon bonds. Oxidizes 2-(2'-hydroxyphenyl)benzene sulphinate (HBPS) to 2-hydroxybiphenyl (HBP) plus sulfite. The rate-limiting step of the '4S' desulfurization pathway. The polypeptide is 2'-hydroxybiphenyl-2-sulfinate desulfinase (Rhodococcus erythropolis (Arthrobacter picolinophilus)).